The following is a 259-amino-acid chain: FAD-linked sulfhydryl oxidase (259 aa).

Belongs to the baculoviridae p33 family. As to quaternary structure, homodimer.

The protein resides in the host cytoplasm. It is found in the host nucleus. The catalysed reaction is 2 R'C(R)SH + O2 = R'C(R)S-S(R)CR' + H2O2. In terms of biological role, functional FAD-linked sulfhydryl oxidase that is required for infectious budded virion (BV) production and for the formation of enveloped occluded virion (ODV). In Lepidoptera (butterflies and moths), this protein is FAD-linked sulfhydryl oxidase (P33).